Reading from the N-terminus, the 177-residue chain is SsrA-binding protein (177 aa).

2 disordered regions span residues 1–23 (MYVP…KDGK) and 148–177 (YDKR…QRGE). A compositionally biased stretch (basic and acidic residues) spans 148 to 165 (YDKRQTLREKQDRRESDR).

It belongs to the SmpB family.

Its subcellular location is the cytoplasm. In terms of biological role, required for rescue of stalled ribosomes mediated by trans-translation. Binds to transfer-messenger RNA (tmRNA), required for stable association of tmRNA with ribosomes. tmRNA and SmpB together mimic tRNA shape, replacing the anticodon stem-loop with SmpB. tmRNA is encoded by the ssrA gene; the 2 termini fold to resemble tRNA(Ala) and it encodes a 'tag peptide', a short internal open reading frame. During trans-translation Ala-aminoacylated tmRNA acts like a tRNA, entering the A-site of stalled ribosomes, displacing the stalled mRNA. The ribosome then switches to translate the ORF on the tmRNA; the nascent peptide is terminated with the 'tag peptide' encoded by the tmRNA and targeted for degradation. The ribosome is freed to recommence translation, which seems to be the essential function of trans-translation. The protein is SsrA-binding protein of Streptomyces avermitilis (strain ATCC 31267 / DSM 46492 / JCM 5070 / NBRC 14893 / NCIMB 12804 / NRRL 8165 / MA-4680).